The chain runs to 258 residues: Clathrin light chain 3 (258 aa).

Positions Met-1 to Ser-18 are enriched in polar residues. Residues Met-1 to Glu-96 are disordered. Position 2 is an N-acetylserine (Ser-2). The span at Ser-34 to Ser-50 shows a compositional bias: low complexity. Polar residues predominate over residues Arg-66–Asp-79. The tract at residues Ser-90–Arg-152 is involved in binding clathrin heavy chain. The stretch at Arg-105–Lys-164 forms a coiled coil. Over residues Leu-224–Pro-234 the composition is skewed to basic residues. The segment at Leu-224 to Leu-258 is disordered. Residues Val-246–Leu-258 show a composition bias toward polar residues.

The protein belongs to the clathrin light chain family. Clathrin coats are formed from molecules containing 3 heavy chains and 3 light chains.

The protein localises to the cytoplasmic vesicle membrane. It is found in the membrane. Its subcellular location is the coated pit. Clathrin is the major protein of the polyhedral coat of coated pits and vesicles. This is Clathrin light chain 3 from Arabidopsis thaliana (Mouse-ear cress).